Here is a 163-residue protein sequence, read N- to C-terminus: Disulfide bond formation protein B (163 aa).

The Cytoplasmic segment spans residues 1–9; the sequence is MKKLTYRKI. The helical transmembrane segment at 10 to 26 threads the bilayer; it reads QSFQAIITVLVIFASFY. Residues 27 to 44 lie on the Periplasmic side of the membrane; sequence LEYAAGLQPCPLCLMQRV. Cysteines 36 and 39 form a disulfide. A helical membrane pass occupies residues 45–58; the sequence is CVFILLGLMGVSLG. The Cytoplasmic portion of the chain corresponds to 59 to 64; it reads TVKKAH. The helical transmembrane segment at 65–82 threads the bilayer; that stretch reads IVSLIQFQVACAGLYFSL. Over 83 to 139 the chain is Periplasmic; sequence RQLWLQSLPSDQAPACMPGLDVLIQYFPWQTVAKALFWGAGDCAEVTWTMFGVSMPG. A disulfide bond links Cys98 and Cys125. A helical membrane pass occupies residues 140–158; the sequence is WAAMYFLSMAIMGLFLFFR. The Cytoplasmic portion of the chain corresponds to 159–163; sequence TRTIN.

Belongs to the DsbB family.

The protein resides in the cell inner membrane. Required for disulfide bond formation in some periplasmic proteins. Acts by oxidizing the DsbA protein. This Legionella pneumophila (strain Lens) protein is Disulfide bond formation protein B.